Here is a 452-residue protein sequence, read N- to C-terminus: Phenylalanine-4-hydroxylase (452 aa).

Ser16 carries the phosphoserine; by PKA modification. The region spanning 36–114 is the ACT domain; that stretch reads SLIFSLKEEV…TVHELSRDKK (79 aa). His285, His290, and Glu330 together coordinate Fe cation.

The protein belongs to the biopterin-dependent aromatic amino acid hydroxylase family. As to quaternary structure, homodimer and homotetramer. Fe(2+) serves as cofactor. In terms of processing, phosphorylation at Ser-16 increases basal activity and facilitates activation by the substrate phenylalanine.

It carries out the reaction (6R)-L-erythro-5,6,7,8-tetrahydrobiopterin + L-phenylalanine + O2 = (4aS,6R)-4a-hydroxy-L-erythro-5,6,7,8-tetrahydrobiopterin + L-tyrosine. It functions in the pathway amino-acid degradation; L-phenylalanine degradation; acetoacetate and fumarate from L-phenylalanine: step 1/6. N-terminal region of PAH is thought to contain allosteric binding sites for phenylalanine and to constitute an 'inhibitory' domain that regulates the activity of a catalytic domain in the C-terminal portion of the molecule. Catalyzes the hydroxylation of L-phenylalanine to L-tyrosine. The sequence is that of Phenylalanine-4-hydroxylase (PAH) from Homo sapiens (Human).